Consider the following 430-residue polypeptide: HCDGVNLTCEACQEPGGLVVPPTDAPVSSTTPYVEDTPEPPLHNFYCSKLLDLVFLLDGSYRLSEAEFEVLKAFVVGTMERLHISQKRIRVAVVEYHDGSHAYLELRARKRPSELRRIASQIKYVGSQLASTSEVLKYTLFQIFGKIDRPEASRVILLLTASQEPQRMARYFTRYLQGFKKKKVILIPVGIGPHANLKQIRLIEKQAPENKAFLLSGVDELEQRRDEIINYLCDLAPEAPAPSKPPQVAHITVSPGISGVSSPGPKRKSLVLDVVFVLEASDEVGEANFNKSKEFLEEVIQRMDVSPAGTHIAVLQYSYTVNVEYTFKEAQSKEDVLRHVREIRYQGGNRTNTGQALQYLSEHSFSPSQGDREQAPNLVYMVTGNPASDEIRRLPGDIQVVPIGVGSRANLQELERISRPITPIFIQDFE.

An N-linked (GlcNAc...) asparagine glycan is attached at asparagine 6. A disulfide bond links cysteine 9 and cysteine 12. Threonine 23, threonine 30, and threonine 31 each carry an O-linked (GalNAc...) threonine glycan. Cysteine 47 and cysteine 233 are disulfide-bonded. The 177-residue stretch at 52 to 228 (DLVFLLDGSY…DELEQRRDEI (177 aa)) folds into the VWFA 1; binding site for platelet glycoprotein Ib domain. Threonine 252 is a glycosylation site (O-linked (GalNAc...) threonine). O-linked (GalNAc...) serine glycosylation occurs at serine 261. Residues 273 to 430 (DVVFVLEASD…ITPIFIQDFE (158 aa)) form the VWFA 2 domain. Asparagine 290 and asparagine 349 each carry an N-linked (GlcNAc...) asparagine glycan.

In terms of assembly, multimeric. Interacts with F8. Post-translationally, N- and O-glycosylated. In terms of tissue distribution, plasma.

The protein resides in the secreted. The protein localises to the extracellular space. It localises to the extracellular matrix. Important in the maintenance of hemostasis, it promotes adhesion of platelets to the sites of vascular injury by forming a molecular bridge between sub-endothelial collagen matrix and platelet-surface receptor complex GPIb-IX-V. Also acts as a chaperone for coagulation factor VIII, delivering it to the site of injury, stabilizing its heterodimeric structure and protecting it from premature clearance from plasma. This is von Willebrand factor from Rattus norvegicus (Rat).